Reading from the N-terminus, the 304-residue chain is uncharacterized protein (304 aa).

The first 22 residues, 1–22 (MKKSLTLLILLLCSLLFSTVLS), serve as a signal peptide directing secretion. A disordered region spans residues 91-111 (PAPAPTPESSDPDEPMKPDDS). N-linked (GlcNAc...) asparagine glycosylation is found at asparagine 133, asparagine 160, asparagine 183, and asparagine 233. The GPI-anchor amidated serine moiety is linked to residue serine 282. Positions 283 to 304 (SSHLFGVLPFLPLVLCIFLFLL) are cleaved as a propeptide — removed in mature form.

The protein localises to the cell membrane. This is an uncharacterized protein from Arabidopsis thaliana (Mouse-ear cress).